The sequence spans 447 residues: Argininosuccinate synthase (447 aa).

ATP contacts are provided by residues 17-25 (AFSGGLDTS) and A43. Y99 is an L-citrulline binding site. Residues G129 and T131 each coordinate ATP. Positions 131, 135, and 136 each coordinate L-aspartate. L-citrulline is bound at residue N135. D136 is a binding site for ATP. Residues R139 and S192 each contribute to the L-citrulline site. D194 contributes to the ATP binding site. Residues T201, E203, and E280 each coordinate L-citrulline.

This sequence belongs to the argininosuccinate synthase family. Type 2 subfamily. In terms of assembly, homotetramer.

The protein localises to the cytoplasm. It catalyses the reaction L-citrulline + L-aspartate + ATP = 2-(N(omega)-L-arginino)succinate + AMP + diphosphate + H(+). It participates in amino-acid biosynthesis; L-arginine biosynthesis; L-arginine from L-ornithine and carbamoyl phosphate: step 2/3. The protein is Argininosuccinate synthase of Salmonella agona (strain SL483).